Here is a 125-residue protein sequence, read N- to C-terminus: Phosphoribosyl-AMP cyclohydrolase (125 aa).

Asp-74 contacts Mg(2+). Residue Cys-75 coordinates Zn(2+). 2 residues coordinate Mg(2+): Asp-76 and Asp-78. Zn(2+) contacts are provided by Cys-92 and Cys-99.

The protein belongs to the PRA-CH family. In terms of assembly, homodimer. Mg(2+) serves as cofactor. It depends on Zn(2+) as a cofactor.

The protein localises to the cytoplasm. It carries out the reaction 1-(5-phospho-beta-D-ribosyl)-5'-AMP + H2O = 1-(5-phospho-beta-D-ribosyl)-5-[(5-phospho-beta-D-ribosylamino)methylideneamino]imidazole-4-carboxamide. It functions in the pathway amino-acid biosynthesis; L-histidine biosynthesis; L-histidine from 5-phospho-alpha-D-ribose 1-diphosphate: step 3/9. Functionally, catalyzes the hydrolysis of the adenine ring of phosphoribosyl-AMP. This chain is Phosphoribosyl-AMP cyclohydrolase, found in Geobacter sp. (strain M21).